Reading from the N-terminus, the 75-residue chain is Exodeoxyribonuclease 7 small subunit (75 aa).

It belongs to the XseB family. As to quaternary structure, heterooligomer composed of large and small subunits.

The protein localises to the cytoplasm. It catalyses the reaction Exonucleolytic cleavage in either 5'- to 3'- or 3'- to 5'-direction to yield nucleoside 5'-phosphates.. Functionally, bidirectionally degrades single-stranded DNA into large acid-insoluble oligonucleotides, which are then degraded further into small acid-soluble oligonucleotides. The protein is Exodeoxyribonuclease 7 small subunit of Anaplasma phagocytophilum (strain HZ).